A 402-amino-acid polypeptide reads, in one-letter code: Ferredoxin--NADP reductase (402 aa).

The CpcD-like domain maps to 18–74 (NRLFIYEVVGLGGDGRNENSLVRKSGTTFITVPYARMNQEMQRITKLGGKIVSIRPA). The disordered stretch occupies residues 80-101 (IVSEGQSSAQASAQSPMASSTK). The span at 85–99 (QSSAQASAQSPMASS) shows a compositional bias: low complexity. Positions 120–245 (KTPFLGKCIE…TGPVGKEMLL (126 aa)) constitute an FAD-binding FR-type domain. FAD contacts are provided by residues 179 to 182 (RLYS), 200 to 202 (CVR), Y206, 218 to 220 (VCS), and T260. S182 and R202 together coordinate NADP(+). Residues T260, 292-293 (VP), 322-323 (SR), K332, 332-336 (KVYVQ), 361-362 (GL), and E400 each bind NADP(+).

This sequence belongs to the ferredoxin--NADP reductase type 1 family. FAD is required as a cofactor.

Its subcellular location is the cellular thylakoid membrane. It catalyses the reaction 2 reduced [2Fe-2S]-[ferredoxin] + NADP(+) + H(+) = 2 oxidized [2Fe-2S]-[ferredoxin] + NADPH. The sequence is that of Ferredoxin--NADP reductase (petH) from Picosynechococcus sp. (strain ATCC 27264 / PCC 7002 / PR-6) (Agmenellum quadruplicatum).